We begin with the raw amino-acid sequence, 131 residues long: Small ribosomal subunit protein uS8 (131 aa).

This sequence belongs to the universal ribosomal protein uS8 family. As to quaternary structure, part of the 30S ribosomal subunit. Contacts proteins S5 and S12.

In terms of biological role, one of the primary rRNA binding proteins, it binds directly to 16S rRNA central domain where it helps coordinate assembly of the platform of the 30S subunit. This is Small ribosomal subunit protein uS8 from Albidiferax ferrireducens (strain ATCC BAA-621 / DSM 15236 / T118) (Rhodoferax ferrireducens).